The following is a 354-amino-acid chain: Alkanal monooxygenase alpha chain (354 aa).

This sequence belongs to the bacterial luciferase oxidoreductase family. As to quaternary structure, heterodimer of an alpha and a beta chain.

The catalysed reaction is a long-chain fatty aldehyde + FMNH2 + O2 = a long-chain fatty acid + hnu + FMN + H2O + 2 H(+). Its function is as follows. Light-emitting reaction in luminous bacteria. The protein is Alkanal monooxygenase alpha chain (luxA) of Aliivibrio fischeri (Vibrio fischeri).